A 442-amino-acid polypeptide reads, in one-letter code: Methionine aminopeptidase 2-1 (442 aa).

The interval 1–92 (MAAQASEELE…ISELFPNNQY (92 aa)) is disordered. The span at 15–25 (NGQNGHAQEQV) shows a compositional bias: polar residues. The segment covering 30-47 (EAADNDDSEDDEKEEEGG) has biased composition (acidic residues). Basic residues predominate over residues 56-72 (AKKKKKRKPKKKKKGGA). His195 lines the substrate pocket. 3 residues coordinate a divalent metal cation: Asp215, Asp226, and His295. His303 provides a ligand contact to substrate. 2 residues coordinate a divalent metal cation: Glu328 and Glu423.

It belongs to the peptidase M24A family. Methionine aminopeptidase eukaryotic type 2 subfamily. The cofactor is Co(2+). Zn(2+) is required as a cofactor. It depends on Mn(2+) as a cofactor. Fe(2+) serves as cofactor.

It is found in the cytoplasm. The enzyme catalyses Release of N-terminal amino acids, preferentially methionine, from peptides and arylamides.. Its function is as follows. Cotranslationally removes the N-terminal methionine from nascent proteins. The N-terminal methionine is often cleaved when the second residue in the primary sequence is small and uncharged (Met-Ala-, Cys, Gly, Pro, Ser, Thr, or Val). The sequence is that of Methionine aminopeptidase 2-1 from Talaromyces marneffei (strain ATCC 18224 / CBS 334.59 / QM 7333) (Penicillium marneffei).